The primary structure comprises 72 residues: Translation initiation factor IF-1 (72 aa).

The S1-like domain maps to 1 to 72 (MAKQSAIEQD…SKGRIVFRYK (72 aa)).

Belongs to the IF-1 family. In terms of assembly, component of the 30S ribosomal translation pre-initiation complex which assembles on the 30S ribosome in the order IF-2 and IF-3, IF-1 and N-formylmethionyl-tRNA(fMet); mRNA recruitment can occur at any time during PIC assembly.

It is found in the cytoplasm. In terms of biological role, one of the essential components for the initiation of protein synthesis. Stabilizes the binding of IF-2 and IF-3 on the 30S subunit to which N-formylmethionyl-tRNA(fMet) subsequently binds. Helps modulate mRNA selection, yielding the 30S pre-initiation complex (PIC). Upon addition of the 50S ribosomal subunit IF-1, IF-2 and IF-3 are released leaving the mature 70S translation initiation complex. This chain is Translation initiation factor IF-1, found in Bacteroides fragilis (strain ATCC 25285 / DSM 2151 / CCUG 4856 / JCM 11019 / LMG 10263 / NCTC 9343 / Onslow / VPI 2553 / EN-2).